Consider the following 595-residue polypeptide: Beta-hexosaminidase 1 (595 aa).

A signal peptide spans 1–20 (MRFAYLATLAGSLLAGLAQA). A glycan (N-linked (GlcNAc...) asparagine) is linked at Asn-313.

This sequence belongs to the glycosyl hydrolase 20 family.

It catalyses the reaction Hydrolysis of terminal non-reducing N-acetyl-D-hexosamine residues in N-acetyl-beta-D-hexosaminides.. Functionally, beta-hexosaminidase that shows a broad substrate specificity. This Coccidioides posadasii (strain RMSCC 757 / Silveira) (Valley fever fungus) protein is Beta-hexosaminidase 1.